Reading from the N-terminus, the 241-residue chain is Major prion protein (241 aa).

A signal peptide spans 1–15; it reads MLVLFVATWSDLGLC. An interaction with ADGRG6 region spans residues 16 to 31; the sequence is KKRPKPGGWNTGGSRY. Residues 16-223 are interaction with GRB2, ERI3 and SYN1; sequence KKRPKPGGWN…ESQAYYQRGS (208 aa). The tract at residues 18-100 is disordered; sequence RPKPGGWNTG…QWNKPSKPKT (83 aa). 5 consecutive repeat copies span residues 44-52, 53-60, 61-68, 69-76, and 77-84. The tract at residues 44–84 is 5 X 8 AA tandem repeats of P-H-G-G-G-W-G-Q; the sequence is PQGGGSWGQPHGGGWGQPHGGGWGQPHGGGWGQPHGGGWGQ. The segment covering 45-88 has biased composition (gly residues); the sequence is QGGGSWGQPHGGGWGQPHGGGWGQPHGGGWGQPHGGGWGQGGGT. The Cu(2+) site is built by His-54, Gly-55, Gly-56, His-62, Gly-63, Gly-64, His-70, Gly-71, Gly-72, His-78, Gly-79, and Gly-80. Cys-172 and Cys-207 are oxidised to a cystine. 2 N-linked (GlcNAc...) asparagine glycosylation sites follow: Asn-174 and Asn-190. A lipid anchor (GPI-anchor amidated serine) is attached at Ser-223. Residues 224-241 constitute a propeptide, removed in mature form; sequence SMVLFSSPPVILLISFLI.

The protein belongs to the prion family. In terms of assembly, monomer and homodimer. Has a tendency to aggregate into amyloid fibrils containing a cross-beta spine, formed by a steric zipper of superposed beta-strands. Soluble oligomers may represent an intermediate stage on the path to fibril formation. Copper binding may promote oligomerization. Interacts with GRB2, APP, ERI3/PRNPIP and SYN1. Mislocalized cytosolically exposed PrP interacts with MGRN1; this interaction alters MGRN1 subcellular location and causes lysosomal enlargement. Interacts with APP. Interacts with KIAA1191. Interacts with ADGRG6.

It localises to the cell membrane. The protein localises to the golgi apparatus. In terms of biological role, its primary physiological function is unclear. May play a role in neuronal development and synaptic plasticity. May be required for neuronal myelin sheath maintenance. May promote myelin homeostasis through acting as an agonist for ADGRG6 receptor. May play a role in iron uptake and iron homeostasis. Soluble oligomers are toxic to cultured neuroblastoma cells and induce apoptosis (in vitro). Association with GPC1 (via its heparan sulfate chains) targets PRNP to lipid rafts. Also provides Cu(2+) or Zn(2+) for the ascorbate-mediated GPC1 deaminase degradation of its heparan sulfate side chains. This Plecturocebus moloch (Dusky titi monkey) protein is Major prion protein (PRNP).